Consider the following 124-residue polypeptide: Small ribosomal subunit protein uS12 (124 aa).

Positions 1–22 are disordered; sequence MATINQLVRKPRSRKVAKSDVP. D89 is modified (3-methylthioaspartic acid). The segment at 104-124 is disordered; sequence TAGVNDRRQGRSKYGAKRGKS. Residues 113-124 show a composition bias toward basic residues; it reads GRSKYGAKRGKS.

It belongs to the universal ribosomal protein uS12 family. Part of the 30S ribosomal subunit. Contacts proteins S8 and S17. May interact with IF1 in the 30S initiation complex.

Functionally, with S4 and S5 plays an important role in translational accuracy. In terms of biological role, interacts with and stabilizes bases of the 16S rRNA that are involved in tRNA selection in the A site and with the mRNA backbone. Located at the interface of the 30S and 50S subunits, it traverses the body of the 30S subunit contacting proteins on the other side and probably holding the rRNA structure together. The combined cluster of proteins S8, S12 and S17 appears to hold together the shoulder and platform of the 30S subunit. The chain is Small ribosomal subunit protein uS12 from Hahella chejuensis (strain KCTC 2396).